Here is a 186-residue protein sequence, read N- to C-terminus: Lipid A acyltransferase PagP (186 aa).

The N-terminal stretch at 1 to 25 (MNVSKYVAIFSFVFIQLISVGKVFA) is a signal peptide. Active-site residues include His-58, Asp-101, and Ser-102.

The protein belongs to the lipid A palmitoyltransferase family. In terms of assembly, homodimer.

It is found in the cell outer membrane. The catalysed reaction is a lipid A + a 1,2-diacyl-sn-glycero-3-phosphocholine = a hepta-acyl lipid A + a 2-acyl-sn-glycero-3-phosphocholine. It carries out the reaction a lipid IVA + a 1,2-diacyl-sn-glycero-3-phosphocholine = a lipid IVB + a 2-acyl-sn-glycero-3-phosphocholine. It catalyses the reaction a lipid IIA + a 1,2-diacyl-sn-glycero-3-phosphocholine = a lipid IIB + a 2-acyl-sn-glycero-3-phosphocholine. In terms of biological role, transfers a fatty acid residue from the sn-1 position of a phospholipid to the N-linked hydroxyfatty acid chain on the proximal unit of lipid A or its precursors. This is Lipid A acyltransferase PagP from Shigella flexneri serotype X (strain 2002017).